Consider the following 306-residue polypeptide: Methionyl-tRNA formyltransferase (306 aa).

A (6S)-5,6,7,8-tetrahydrofolate-binding site is contributed by 108–111 (SLLP).

Belongs to the Fmt family.

It catalyses the reaction L-methionyl-tRNA(fMet) + (6R)-10-formyltetrahydrofolate = N-formyl-L-methionyl-tRNA(fMet) + (6S)-5,6,7,8-tetrahydrofolate + H(+). Functionally, attaches a formyl group to the free amino group of methionyl-tRNA(fMet). The formyl group appears to play a dual role in the initiator identity of N-formylmethionyl-tRNA by promoting its recognition by IF2 and preventing the misappropriation of this tRNA by the elongation apparatus. The sequence is that of Methionyl-tRNA formyltransferase from Arthrobacter sp. (strain FB24).